The chain runs to 183 residues: Ribose 1,5-bisphosphate phosphokinase PhnN (183 aa).

This sequence belongs to the ribose 1,5-bisphosphokinase family.

It carries out the reaction alpha-D-ribose 1,5-bisphosphate + ATP = 5-phospho-alpha-D-ribose 1-diphosphate + ADP. It participates in metabolic intermediate biosynthesis; 5-phospho-alpha-D-ribose 1-diphosphate biosynthesis; 5-phospho-alpha-D-ribose 1-diphosphate from D-ribose 5-phosphate (route II): step 3/3. In terms of biological role, catalyzes the phosphorylation of ribose 1,5-bisphosphate to 5-phospho-D-ribosyl alpha-1-diphosphate (PRPP). The polypeptide is Ribose 1,5-bisphosphate phosphokinase PhnN (Azotobacter vinelandii (strain DJ / ATCC BAA-1303)).